Consider the following 102-residue polypeptide: Parathymosin (102 aa).

Positions 1 to 102 (MSEKSVEAAA…RQKTENGASA (102 aa)) are disordered. The residue at position 2 (serine 2) is an N-acetylserine. Serine 2 carries the phosphoserine modification. Residue lysine 4 is modified to N6-acetyllysine. Phosphoserine occurs at positions 5 and 13. Residues 13-37 (SAKDLKEKKEKVEEKASRKERKKEV) show a composition bias toward basic and acidic residues. Lysine 15 bears the N6-acetyllysine mark. Acidic residues predominate over residues 38–76 (VEEEENGAEEEEEETAEDGEEEDEGEEEDEEEEEEDDEG). Residue threonine 52 is modified to Phosphothreonine. At lysine 92 the chain carries N6-acetyllysine.

The protein belongs to the pro/parathymosin family.

Parathymosin may mediate immune function by blocking the effect of prothymosin alpha which confers resistance to certain opportunistic infections. In Homo sapiens (Human), this protein is Parathymosin (PTMS).